The following is a 1344-amino-acid chain: Myb-binding protein 1A (1344 aa).

The interval 1 to 24 is disordered; that stretch reads MAEMKSPTKAEPATPAEAAQSDRH. A2 bears the N-acetylalanine mark. The segment at 2–580 is interaction with MYB; sequence AEMKSPTKAE…WDQMMSTLKE (579 aa). Positions 7–19 are enriched in low complexity; it reads PTKAEPATPAEAA. Residues K69 and K156 each carry the N6-acetyllysine modification. 2 consecutive short sequence motifs (nuclear export signal) follow at residues 238-256 and 261-279; these read SEDNIPSLVNILKVAANSV and KLPNVALDLLRLALKESRF. Disordered regions lie at residues 710-751 and 1146-1344; these read DEKQ…DKDV and QRPK…VQTP. Acidic residues predominate over residues 732 to 747; that stretch reads SDMDSEDGEESEEEDR. Residues 1148–1159 are compositionally biased toward basic and acidic residues; sequence PKSEKKNAKDIP. K1149 is covalently cross-linked (Glycyl lysine isopeptide (Lys-Gly) (interchain with G-Cter in SUMO2)). The segment at 1152–1344 is required for nuclear and nucleolar localization; the sequence is KKNAKDIPSD…RVASRRVQTP (193 aa). Phosphoserine is present on residues S1160 and S1164. Basic residues predominate over residues 1168–1185; it reads TKRKKKGFLPETKKRKKL. S1187 bears the Phosphoserine mark. Positions 1188–1202 are enriched in polar residues; it reads EGTTPEKNAASQQDA. T1191 is subject to Phosphothreonine. A phosphoserine mark is found at S1219 and S1244. Over residues 1249–1258 the composition is skewed to polar residues; the sequence is NPTLSPSTPA. T1251 bears the Phosphothreonine mark. Position 1253 is a phosphoserine (S1253). Phosphothreonine occurs at positions 1256 and 1277. Residues S1280, S1303, and S1318 each carry the phosphoserine modification. Residues 1317 to 1329 show a composition bias toward low complexity; that stretch reads LSLVSRSPSLLQS. R1322 is modified (citrulline). Residues S1323, S1325, and S1329 each carry the phosphoserine modification.

This sequence belongs to the MYBBP1A family. As to quaternary structure, component of the B-WICH complex, at least composed of SMARCA5/SNF2H, BAZ1B/WSTF, SF3B1, DEK, MYO1C, ERCC6, MYBBP1A and DDX21. Binds to and represses JUN and MYB via the leucine zipper regions present in these proteins. Also binds to and represses PPARGC1A: this interaction is abrogated when PPARGC1A is phosphorylated by MAPK1/ERK. Binds to and stimulates transcription by AHR. Binds to KPNA2. Interacts with CLOCK and CRY1. In terms of processing, citrullinated by PADI4. Ubiquitously expressed.

It localises to the nucleus. Its subcellular location is the nucleolus. It is found in the cytoplasm. Functionally, may activate or repress transcription via interactions with sequence specific DNA-binding proteins. Repression may be mediated at least in part by histone deacetylase activity (HDAC activity). Acts as a corepressor and in concert with CRY1, represses the transcription of the core circadian clock component PER2. Preferentially binds to dimethylated histone H3 'Lys-9' (H3K9me2) on the PER2 promoter. Has a role in rRNA biogenesis together with PWP1. In Mus musculus (Mouse), this protein is Myb-binding protein 1A (Mybbp1a).